Consider the following 312-residue polypeptide: Homoserine O-succinyltransferase (312 aa).

The active-site Acyl-thioester intermediate is Cys-142. Residues Lys-163 and Ser-192 each coordinate substrate. The active-site Proton acceptor is the His-235. Residue Glu-237 is part of the active site. Arg-249 contacts substrate.

This sequence belongs to the MetA family.

It is found in the cytoplasm. The enzyme catalyses L-homoserine + succinyl-CoA = O-succinyl-L-homoserine + CoA. It participates in amino-acid biosynthesis; L-methionine biosynthesis via de novo pathway; O-succinyl-L-homoserine from L-homoserine: step 1/1. Transfers a succinyl group from succinyl-CoA to L-homoserine, forming succinyl-L-homoserine. The polypeptide is Homoserine O-succinyltransferase (Shewanella halifaxensis (strain HAW-EB4)).